The primary structure comprises 184 residues: Major fimbrial subunit (184 aa).

The signal sequence occupies residues 1-22; that stretch reads MKLSKIALAAALVFGINSVATA. Cysteine 49 and cysteine 88 form a disulfide bridge.

This sequence belongs to the fimbrial protein family.

The protein resides in the fimbrium. In terms of biological role, major structural component of PMF fimbriae. This chain is Major fimbrial subunit (pmfA), found in Proteus mirabilis (strain HI4320).